A 423-amino-acid polypeptide reads, in one-letter code: MASALEQFVNSVRQLSSQGQMTQLCELINKSGELLAKNLSHLDTVLGALDVQEHSLGVLAVLFVKFSMPSIPDFETLFSQVQLFISTCNGEHIRYATDTFAGLCHQLTNALVERKQPLRGICVLRQAIDKMQMNANQLTSIHADLCQLSLLAKCFKPALAYLDVDMMDICKENGAYDAKPFLCYYYYGGMIYTGLKNFERALYFYEQAITTPAMAVSHIMLEAYKKYILVSLILHGKVQQLPKYTSQIVGRFIKPLSNAYHELAQVYSTNNPAELRNLVSKHNETFTRDNNMGLVKQCLSSLYKKNIQRLTKTFLTLSLQDMASRVQLSGAQEAEKYVLYMIEDGEIFASINQKDGMVCFHDNPEKYNNPAMLHNIDQEMLRCIDLDDRLKAMDQEITVNPQFVQKSMGSQDDDSGSKPSSYS.

The PCI domain maps to 197–365; sequence NFERALYFYE…GMVCFHDNPE (169 aa). The disordered stretch occupies residues 403–423; the sequence is FVQKSMGSQDDDSGSKPSSYS.

The protein belongs to the CSN3 family. In terms of assembly, component of the CSN complex, probably composed of cops1, cops2, cops3, cops4, cops5, cops6, cops7, cops8 and cops9.

It is found in the cytoplasm. The protein resides in the nucleus. In terms of biological role, component of the COP9 signalosome complex (CSN), a complex involved in various cellular and developmental processes. The CSN complex is an essential regulator of the ubiquitin (Ubl) conjugation pathway by mediating the deneddylation of the cullin subunits of E3 ligase complexes, leading to modify the Ubl ligase activity. The polypeptide is COP9 signalosome complex subunit 3 (cops3) (Xenopus tropicalis (Western clawed frog)).